Reading from the N-terminus, the 707-residue chain is Choline transporter-like protein 4 (707 aa).

Residues 1-32 (MGKKQKENEAYGNSAKYDPSFRGPIKNRGCTD) are Cytoplasmic-facing. A helical membrane pass occupies residues 33–53 (IICCVLFLVFILGYIVVGLVA). At 54–227 (WVYGDPRQVL…KIFEDFAQSW (174 aa)) the chain is on the extracellular side. N-linked (GlcNAc...) asparagine glycans are attached at residues N67, N185, N195, and N196. The helical transmembrane segment at 228–248 (YWILVALGVALVLSLLFILLL) threads the bilayer. Over 249-250 (RL) the chain is Cytoplasmic. Residues 251-271 (VAAPLVLLLIVGVLAVLAYGI) form a helical membrane-spanning segment. The Extracellular segment spans residues 272–307 (YHCWQQYRELRDQGVSITQLGFTANLSAYQNVKETW). Residue N296 is glycosylated (N-linked (GlcNAc...) asparagine). Residues 308 to 328 (LAALIILAVLEGVLLLMLIFL) traverse the membrane as a helical segment. At 329 to 356 (RQRIRIAIALLKEASRAVGQMMSTMFYP) the chain is on the cytoplasmic side. The helical transmembrane segment at 357 to 377 (LVTFVLLVICIGYWAVTALYL) threads the bilayer. Residues 378 to 452 (ATSGQPQYVY…GILGLFWTVN (75 aa)) are Extracellular-facing. Residues N391, N403, and N413 are each glycosylated (N-linked (GlcNAc...) asparagine). The chain crosses the membrane as a helical span at residues 453 to 473 (WVLALGQCVLAGAFASFYWAF). The Cytoplasmic portion of the chain corresponds to 474–498 (HKPRDIPTFPLSSAFIRTLRYHTGS). Residues 499 to 519 (LAFGALILTLVQIARVILEYI) traverse the membrane as a helical segment. Residues 520 to 557 (DHKLRGSQNPVARCIICCFKCCLWCLEKFIKFLNRNAY) lie on the Extracellular side of the membrane. The helical transmembrane segment at 558-578 (IMIAIYGKNFCVSAKNAFMLL) threads the bilayer. At 579-594 (MRNVVRVVVLDKVTDL) the chain is on the cytoplasmic side. The chain crosses the membrane as a helical span at residues 595–615 (LLFFGKLLVVGGVGVLSFFFF). Over 616–635 (SGRIKGLGKDFKNPDLNYYW) the chain is Extracellular. A helical membrane pass occupies residues 636–656 (LPIMTSIMGAYVIASGFFSVF). Topologically, residues 657 to 707 (GMCVDTLFLCFLEDLERNDGSQERPYYMPKALLKILGKKNEVPTGGKNRKK) are cytoplasmic.

Belongs to the CTL (choline transporter-like) family. Post-translationally, N-glycosylated; N-glycosylation of Asn-67 and Asn-391 is required for a proper thiamine pyrophosphate uptake. As to expression, highly expressed in intestine, kidney and stomach. Also expressed in testis and lung.

The protein resides in the membrane. The protein localises to the apical cell membrane. The enzyme catalyses choline(out) + n H(+)(in) = choline(in) + n H(+)(out). It carries out the reaction thiamine diphosphate(out) = thiamine diphosphate(in). Choline transporter that plays a role in the choline-acetylcholine system and is required to the efferent innervation of hair cells in the olivocochlear bundle for the maintenance of physiological function of outer hair cells and the protection of hair cells from acoustic injury. Also described as a thiamine pyrophosphate transporter in colon, may mediate the absorption of microbiota-generated thiamine pyrophosphate and contribute to host thiamine (vitamin B1) homeostasis. The protein is Choline transporter-like protein 4 of Rattus norvegicus (Rat).